A 500-amino-acid chain; its full sequence is MSGSMAQAFAHNFLGHSPRWYKACIVGFLMLNALVLWSVGPVAAGWLLVIEFIFTLAMALKCYPLMPGGLLLIEALLLKMTTPQALYEELQHNFPVILLLMFMVAGIYFMKDLLLFLFSRLLLGVRSKALLALMFCFLSAFLSAFLDALTVTAVIISAAVGFYSVYHRVASGNDPRQDSEFSDDQHLPQLHHEDLEQFRAFLRSLLMHGAVGTALGGVCTLVGEPQNLLIGHEMGWHFAEFFLKVAPVSLPVLVAGLVTCLLLEKLRWFGYGTLLPDNVRAVLANYAAEDNAERTPRQRAALLVQGCAALILIAGLAFHIAEVGLIGLMVIVLITAFTGITDEHRLGSAFKDAMPFTALLVVFFAVVAVIHDQQLFAPLIQWVLALPADQQPGMLFIANGLLSAISDNVFVATIYITEVKQAFLSGHMSREHFETLAIAINTGTNLPSVATPNGQAAFLFLLTSAIAPLVRLSYGRMVWMALPYTVVMGLLGWYAVSYWL.

12 helical membrane-spanning segments follow: residues 28 to 50, 58 to 78, 96 to 116, 129 to 149, 150 to 170, 205 to 225, 241 to 261, 311 to 331, 350 to 370, 394 to 414, 449 to 469, and 477 to 497; these read FLML…LLVI, MALK…ALLL, VILL…LLLF, ALLA…LDAL, TVTA…HRVA, LLMH…VGEP, FFLK…VTCL, ILIA…LMVI, FKDA…VAVI, MLFI…VATI, VATP…IAPL, and MVWM…YAVS.

This sequence belongs to the NhaB Na(+)/H(+) (TC 2.A.34) antiporter family.

It is found in the cell inner membrane. The catalysed reaction is 2 Na(+)(in) + 3 H(+)(out) = 2 Na(+)(out) + 3 H(+)(in). Its function is as follows. Na(+)/H(+) antiporter that extrudes sodium in exchange for external protons. This chain is Na(+)/H(+) antiporter NhaB, found in Pseudomonas fluorescens (strain Pf0-1).